The sequence spans 956 residues: Ubiquitin carboxyl-terminal hydrolase CYLD (956 aa).

The interaction with TRIP stretch occupies residues 106–593 (CEERFSLFKN…LEIMIGKKKG (488 aa)). 2 consecutive CAP-Gly domains span residues 153 to 198 (LAER…VFVA) and 253 to 286 (DVLPGKESLGYFVGVDMDNPIGNWDGRFDGVQLC). The interval 309–353 (SVTQERRPPKLAFMSRGVGDKGSSSHNKPKATGSTSDPGNRNRSE) is disordered. The span at 330–349 (GSSSHNKPKATGSTSDPGNR) shows a compositional bias: polar residues. Ser387 carries the post-translational modification Phosphoserine. A disordered region spans residues 392 to 411 (STDFDRSSPPLQPPPVNSLT). An interaction with TRAF2 region spans residues 394–469 (DFDRSSPPLQ…LAMPPGNSHG (76 aa)). A phosphoserine mark is found at Ser418 and Ser422. The interval 470–554 (LEVGSLAEVK…FASLQPVSNQ (85 aa)) is interaction with IKBKG/NEMO. Positions 492–535 (GQPPGLNEVLAGLELEDECAGCTDGTFRGTRYFTCALKKALFVK) constitute a CAP-Gly 3 domain. Positions 592–950 (KGIQGHYNSC…DAYMCMYQSP (359 aa)) constitute a USP domain. The active-site Nucleophile is the Cys601. A B-box region spans residues 781 to 833 (LEDTPRQCRICGGLAMYECRECYDDPDISAGKIKQFCKTCNTQVHLHPKRLNH). Residues Cys788, Cys791, Cys799, Cys802, Cys817, Cys820, His825, and His833 each contribute to the Zn(2+) site. The active-site Proton acceptor is the His871.

Belongs to the peptidase C19 family. Interacts (via CAP-Gly domain) with IKBKG/NEMO (via proline-rich C-terminal region). Interacts with TRAF2 and TRIP. Interacts with PLK1, DVL1, DVL3, MAVS, TBK1, IKKE and RIGI. Interacts (via CAP-Gly domain) with microtubules. Interacts with HDAC6 and BCL3. Interacts with MAP3K7. Identified in a complex with TRAF6 and SQSTM1. Interacts with OPTN and SQSTM1. Interacts with CEP350. Interacts with RNF31; the interaction is indirect and is mediated via SPATA2. Interacts with SPATA2 (via the PUB domain); the interaction is direct and recruits CYLD to the LUBAC complex, thereby regulating TNF-alpha-induced necroptosis. Ubiquitinated. Polyubiquitinated in hepatocytes treated with palmitic acid. Ubiquitination is mediated by E3 ligase TRIM47 and leads to proteasomal degradation. Post-translationally, phosphorylated on several serine residues by IKKA and/or IKKB in response to immune stimuli. Phosphorylation requires IKBKG. Phosphorylation abolishes TRAF2 deubiquitination, interferes with the activation of Jun kinases, and strongly reduces CD40-dependent gene activation by NF-kappa-B. Detected in fetal brain, testis, and skeletal muscle, and at a lower level in adult brain, leukocytes, liver, heart, kidney, spleen, ovary and lung. Isoform 2 is found in all tissues except kidney.

It localises to the cytoplasm. Its subcellular location is the perinuclear region. It is found in the cytoskeleton. The protein resides in the cell membrane. The protein localises to the microtubule organizing center. It localises to the centrosome. Its subcellular location is the spindle. It is found in the cilium basal body. It catalyses the reaction Thiol-dependent hydrolysis of ester, thioester, amide, peptide and isopeptide bonds formed by the C-terminal Gly of ubiquitin (a 76-residue protein attached to proteins as an intracellular targeting signal).. Inhibited by phosphorylation at serine residues. In terms of biological role, deubiquitinase that specifically cleaves 'Lys-63'- and linear 'Met-1'-linked polyubiquitin chains and is involved in NF-kappa-B activation and TNF-alpha-induced necroptosis. Negatively regulates NF-kappa-B activation by deubiquitinating upstream signaling factors. Contributes to the regulation of cell survival, proliferation and differentiation via its effects on NF-kappa-B activation. Negative regulator of Wnt signaling. Inhibits HDAC6 and thereby promotes acetylation of alpha-tubulin and stabilization of microtubules. Plays a role in the regulation of microtubule dynamics, and thereby contributes to the regulation of cell proliferation, cell polarization, cell migration, and angiogenesis. Required for normal cell cycle progress and normal cytokinesis. Inhibits nuclear translocation of NF-kappa-B. Plays a role in the regulation of inflammation and the innate immune response, via its effects on NF-kappa-B activation. Dispensable for the maturation of intrathymic natural killer cells, but required for the continued survival of immature natural killer cells. Negatively regulates TNFRSF11A signaling and osteoclastogenesis. Involved in the regulation of ciliogenesis, allowing ciliary basal bodies to migrate and dock to the plasma membrane; this process does not depend on NF-kappa-B activation. Ability to remove linear ('Met-1'-linked) polyubiquitin chains regulates innate immunity and TNF-alpha-induced necroptosis: recruited to the LUBAC complex via interaction with SPATA2 and restricts linear polyubiquitin formation on target proteins. Regulates innate immunity by restricting linear polyubiquitin formation on RIPK2 in response to NOD2 stimulation. Involved in TNF-alpha-induced necroptosis by removing linear ('Met-1'-linked) polyubiquitin chains from RIPK1, thereby regulating the kinase activity of RIPK1. Negatively regulates intestinal inflammation by removing 'Lys-63' linked polyubiquitin chain of NLRP6, thereby reducing the interaction between NLRP6 and PYCARD/ASC and formation of the NLRP6 inflammasome. Does not catalyze deubiquitination of heterotypic 'Lys-63'-/'Lys-48'-linked branched ubiquitin chains. Removes 'Lys-63' linked polyubiquitin chain of MAP3K7, which inhibits phosphorylation and blocks downstream activation of the JNK-p38 kinase cascades. Also removes 'Lys-63'-linked polyubiquitin chains of MAP3K1 and MA3P3K3, which inhibit their interaction with MAP2K1 and MAP2K2. In Homo sapiens (Human), this protein is Ubiquitin carboxyl-terminal hydrolase CYLD.